We begin with the raw amino-acid sequence, 268 residues long: Minor capsid protein VP2 (268 aa).

A compositionally biased stretch (polar residues) spans 132–144 (STPQSLGALTGRT). A disordered region spans residues 132–199 (STPQSLGALT…SLSSAARTRS (68 aa)). Residues 145–163 (NSRVSAPARSSPSALSNAP) are compositionally biased toward low complexity. A compositionally biased stretch (polar residues) spans 164-178 (TATSLHSNQTVSTRL). A compositionally biased stretch (low complexity) spans 179–195 (GSSAGSGTGVSSLSSAA).

This sequence belongs to the norovirus VP2 family. As to quaternary structure, homooligomer. The portal-like structure consists in 12 copies of VP2. Interacts with capsid protein VP1.

Its subcellular location is the virion. It is found in the host cytoplasm. In terms of biological role, minor structural protein that forms a portal-like structure at a unique three-fold axis of symmetry, following binding to the host receptor. The channel formed by VP2 may allow the delivery of the viral genome through the host endosomal membrane. This chain is Minor capsid protein VP2, found in Lordsdale virus (strain GII/Human/United Kingdom/Lordsdale/1993) (Human enteric calicivirus).